Here is a 345-residue protein sequence, read N- to C-terminus: Ribosomal RNA large subunit methyltransferase F (345 aa).

The span at 1 to 14 shows a compositional bias: polar residues; the sequence is MTSKPMTRRPTANN. Disordered stretches follow at residues 1-35 and 225-258; these read MTSK…RNPH and EANS…NAAQ. The span at 229 to 239 shows a compositional bias: basic residues; that stretch reads RKQHNLQRHRG. Polar residues predominate over residues 246-258; sequence ISRSSTKSGNAAQ.

This sequence belongs to the methyltransferase superfamily. METTL16/RlmF family.

The protein localises to the cytoplasm. The catalysed reaction is adenosine(1618) in 23S rRNA + S-adenosyl-L-methionine = N(6)-methyladenosine(1618) in 23S rRNA + S-adenosyl-L-homocysteine + H(+). In terms of biological role, specifically methylates the adenine in position 1618 of 23S rRNA. The sequence is that of Ribosomal RNA large subunit methyltransferase F from Psychrobacter arcticus (strain DSM 17307 / VKM B-2377 / 273-4).